The chain runs to 146 residues: Large ribosomal subunit protein uL15 (146 aa).

Positions 1–13 (MKLHELKPAEGSR) are enriched in basic and acidic residues. The interval 1-51 (MKLHELKPAEGSRKVRNRVGRGTSSGNGKTSGRGQKGQKARSGGGVRLGFE) is disordered. Gly residues-rich tracts occupy residues 23 to 35 (TSSGNGKTSGRGQ) and 42 to 51 (SGGGVRLGFE).

The protein belongs to the universal ribosomal protein uL15 family. In terms of assembly, part of the 50S ribosomal subunit.

Its function is as follows. Binds to the 23S rRNA. In Streptococcus pneumoniae serotype 2 (strain D39 / NCTC 7466), this protein is Large ribosomal subunit protein uL15.